The chain runs to 339 residues: Glyceraldehyde-3-phosphate dehydrogenase (339 aa).

Residues 12-13, aspartate 39, arginine 84, and serine 127 contribute to the NAD(+) site; that span reads RI. D-glyceraldehyde 3-phosphate-binding positions include 157–159, threonine 188, arginine 203, 216–217, and arginine 239; these read SCT and TG. The Nucleophile role is filled by cysteine 158. Asparagine 320 contributes to the NAD(+) binding site.

This sequence belongs to the glyceraldehyde-3-phosphate dehydrogenase family. As to quaternary structure, homotetramer.

The protein resides in the cytoplasm. The enzyme catalyses D-glyceraldehyde 3-phosphate + phosphate + NAD(+) = (2R)-3-phospho-glyceroyl phosphate + NADH + H(+). It participates in carbohydrate degradation; glycolysis; pyruvate from D-glyceraldehyde 3-phosphate: step 1/5. Functionally, catalyzes the oxidative phosphorylation of glyceraldehyde 3-phosphate (G3P) to 1,3-bisphosphoglycerate (BPG) using the cofactor NAD. The first reaction step involves the formation of a hemiacetal intermediate between G3P and a cysteine residue, and this hemiacetal intermediate is then oxidized to a thioester, with concomitant reduction of NAD to NADH. The reduced NADH is then exchanged with the second NAD, and the thioester is attacked by a nucleophilic inorganic phosphate to produce BPG. In Mycobacterium leprae (strain TN), this protein is Glyceraldehyde-3-phosphate dehydrogenase (gapA).